The following is a 396-amino-acid chain: Flavohemoprotein (396 aa).

A Globin domain is found at 1–136 (MLDAQTIATV…LANVFINREA (136 aa)). A heme b-binding site is contributed by His85. Active-site charge relay system residues include Tyr95 and Glu135. Residues 147–396 (GGWEGTRDFR…YECFGPHKVL (250 aa)) are reductase. The 106-residue stretch at 150 to 255 (EGTRDFRIVA…VAPAGDFFMA (106 aa)) folds into the FAD-binding FR-type domain. Residues Tyr188 and 204–207 (RQYS) contribute to the FAD site. 268-273 (GVGQTP) contributes to the NADP(+) binding site. Residue 389–392 (CFGP) coordinates FAD.

It belongs to the globin family. Two-domain flavohemoproteins subfamily. The protein in the C-terminal section; belongs to the flavoprotein pyridine nucleotide cytochrome reductase family. Heme b serves as cofactor. It depends on FAD as a cofactor.

The catalysed reaction is 2 nitric oxide + NADPH + 2 O2 = 2 nitrate + NADP(+) + H(+). It catalyses the reaction 2 nitric oxide + NADH + 2 O2 = 2 nitrate + NAD(+) + H(+). Functionally, is involved in NO detoxification in an aerobic process, termed nitric oxide dioxygenase (NOD) reaction that utilizes O(2) and NAD(P)H to convert NO to nitrate, which protects the bacterium from various noxious nitrogen compounds. Therefore, plays a central role in the inducible response to nitrosative stress. This chain is Flavohemoprotein, found in Escherichia coli O6:H1 (strain CFT073 / ATCC 700928 / UPEC).